Here is a 196-residue protein sequence, read N- to C-terminus: Translation initiation factor IF-3 (196 aa).

This sequence belongs to the IF-3 family. Monomer.

The protein localises to the cytoplasm. Functionally, IF-3 binds to the 30S ribosomal subunit and shifts the equilibrium between 70S ribosomes and their 50S and 30S subunits in favor of the free subunits, thus enhancing the availability of 30S subunits on which protein synthesis initiation begins. This is Translation initiation factor IF-3 from Wigglesworthia glossinidia brevipalpis.